The following is a 561-amino-acid chain: Asparagine synthetase [glutamine-hydrolyzing] (561 aa).

Cys-2 serves as the catalytic For GATase activity. A Glutamine amidotransferase type-2 domain is found at 2–191; the sequence is CGIWALFGSD…PGHYEVLDLK (190 aa). L-glutamine contacts are provided by residues 49 to 53, 75 to 77, and Asp-97; these read RLAVV and NGE. An Asparagine synthetase domain is found at 213 to 536; it reads HALYDGVEKL…PGRADWLPHY (324 aa). Residues Leu-256, Ile-288, and 363-364 contribute to the ATP site; that span reads SG. An N6-acetyllysine modification is found at Lys-385. At Thr-545 the chain carries Phosphothreonine.

It carries out the reaction L-aspartate + L-glutamine + ATP + H2O = L-asparagine + L-glutamate + AMP + diphosphate + H(+). Its pathway is amino-acid biosynthesis; L-asparagine biosynthesis; L-asparagine from L-aspartate (L-Gln route): step 1/1. The protein is Asparagine synthetase [glutamine-hydrolyzing] (ASNS) of Bos taurus (Bovine).